Reading from the N-terminus, the 430-residue chain is Crotonyl-CoA carboxylase/reductase (430 aa).

The protein belongs to the zinc-containing alcohol dehydrogenase family. Crotonyl-CoA carboxylase/reductase subfamily. In terms of assembly, homodimer. It depends on Despite some sequence similarity to zinc-containing alcohol dehydrogenases, this enzyme does not bind any metals. as a cofactor.

It catalyses the reaction (2S)-ethylmalonyl-CoA + NADP(+) = (2E)-butenoyl-CoA + CO2 + NADPH. It carries out the reaction (S)-methylmalonyl-CoA + NADP(+) = acryloyl-CoA + CO2 + NADPH. The catalysed reaction is butanoyl-CoA + NADP(+) = (2E)-butenoyl-CoA + NADPH + H(+). In terms of biological role, catalyzes the NADPH-dependent reductive carboxylation of crotonyl-CoA ((2E)-butenoyl-CoA) to (2S)-ethylmalonyl-CoA, in the presence of CO2. This is a key reaction in the ethylmalonyl-CoA pathway for acetyl-CoA assimilation required for R.sphaeroides growth on acetate as sole carbon source. Is also able to accept acryloyl-CoA as an alternative substrate, yielding (2S)-methylmalonyl-CoA. To a lesser extent, when CO2 is absent, the enzyme also catalyzes the reduction of crotonyl-CoA to butanoyl-CoA. The protein is Crotonyl-CoA carboxylase/reductase of Cereibacter sphaeroides (strain ATCC 17023 / DSM 158 / JCM 6121 / CCUG 31486 / LMG 2827 / NBRC 12203 / NCIMB 8253 / ATH 2.4.1.) (Rhodobacter sphaeroides).